Reading from the N-terminus, the 321-residue chain is Fimbria adhesin protein (321 aa).

An N-terminal signal peptide occupies residues 1-18 (MKKLTLFIGLMALGTTSA).

The protein belongs to the fimbrial protein family.

The protein resides in the fimbrium. This Klebsiella pneumoniae protein is Fimbria adhesin protein (mrkD).